The primary structure comprises 152 residues: Large ribosomal subunit protein bL9 (152 aa).

It belongs to the bacterial ribosomal protein bL9 family.

Its function is as follows. Binds to the 23S rRNA. The protein is Large ribosomal subunit protein bL9 of Synechococcus sp. (strain CC9311).